Reading from the N-terminus, the 298-residue chain is Pheromone-regulated membrane protein 9 (298 aa).

Over 1-111 the chain is Cytoplasmic; it reads MSPQYHFYFV…YWIYEVTRHK (111 aa). Residues 112–132 form a helical membrane-spanning segment; that stretch reads AAVILLVLIVTSILLLVFFYN. Topologically, residues 133–137 are extracellular; that stretch reads TEFCV. A helical transmembrane segment spans residues 138–158; sequence AFEILLFSFCFPGTCMVVIAF. Over 159–298 the chain is Cytoplasmic; that stretch reads SEPIGDREFK…QEYPGVDEFF (140 aa). The segment at 235–262 is disordered; it reads SSASNVKDAQSNDETAGTPNEAAESSSF. A COPII binding region spans residues 297 to 298; that stretch reads FF.

It belongs to the DUP/COS family. As to quaternary structure, interacts with PRM8. Binds to COPII coated vesicles.

It localises to the cell membrane. May be involved in endoplasmic reticulum exit trafficking of proteins. The chain is Pheromone-regulated membrane protein 9 (PRM9) from Saccharomyces cerevisiae (strain ATCC 204508 / S288c) (Baker's yeast).